A 575-amino-acid polypeptide reads, in one-letter code: RecBCD enzyme subunit RecD (575 aa).

170–177 (GGPGTGKT) is an ATP binding site.

The protein belongs to the RecD family. As to quaternary structure, heterotrimer of RecB, RecC and RecD. All subunits contribute to DNA-binding.

The catalysed reaction is Couples ATP hydrolysis with the unwinding of duplex DNA at the replication fork by translocating in the 5'-3' direction. This creates two antiparallel DNA single strands (ssDNA). The leading ssDNA polymer is the template for DNA polymerase III holoenzyme which synthesizes a continuous strand.. It carries out the reaction ATP + H2O = ADP + phosphate + H(+). Its function is as follows. A helicase/nuclease that prepares dsDNA breaks (DSB) for recombinational DNA repair. Binds to DSBs and unwinds DNA via a highly rapid and processive ATP-dependent bidirectional helicase activity. Holoenzyme degrades any linearized DNA that is unable to undergo homologous recombination. In the holoenzyme this subunit has ssDNA-dependent ATPase and 5'-3' helicase activity. When added to pre-assembled RecBC greatly stimulates nuclease activity and augments holoenzyme processivity. Unlike the case in E.coli, suppresses RecA-dependent homologous recombination, is instead required for single-strand annealing pathway repair of DSB. In terms of biological role, a helicase/nuclease that prepares dsDNA breaks (DSB) for recombinational DNA repair. Binds to DSBs and unwinds DNA via a highly rapid and processive ATP-dependent bidirectional helicase activity. Unwinds dsDNA until it encounters a Chi (crossover hotspot instigator) sequence from the 3' direction. Cuts ssDNA a few nucleotides 3' to the Chi site. The properties and activities of the enzyme are changed at Chi. The Chi-altered holoenzyme produces a long 3'-ssDNA overhang and facilitates RecA-binding to the ssDNA for homologous DNA recombination and repair. Holoenzyme degrades any linearized DNA that is unable to undergo homologous recombination. In the holoenzyme this subunit has ssDNA-dependent ATPase and 5'-3' helicase activity. When added to pre-assembled RecBC greatly stimulates nuclease activity and augments holoenzyme processivity. Negatively regulates the RecA-loading ability of RecBCD. This chain is RecBCD enzyme subunit RecD, found in Mycobacterium tuberculosis (strain CDC 1551 / Oshkosh).